A 396-amino-acid polypeptide reads, in one-letter code: Elongation factor Tu (396 aa).

The 197-residue stretch at 10–206 folds into the tr-type G domain; it reads KPHVNVGTIG…AMDEYIPTPE (197 aa). Residues 19–26 are G1; that stretch reads GHVDHGKT. Position 19–26 (19–26) interacts with GTP; the sequence is GHVDHGKT. Thr-26 contributes to the Mg(2+) binding site. A G2 region spans residues 60 to 64; that stretch reads GITIA. Positions 81–84 are G3; sequence DCPG. Residues 81–85 and 136–139 each bind GTP; these read DCPGH and NKAD. A G4 region spans residues 136 to 139; it reads NKAD. The segment at 174–176 is G5; it reads SAL.

This sequence belongs to the TRAFAC class translation factor GTPase superfamily. Classic translation factor GTPase family. EF-Tu/EF-1A subfamily. In terms of assembly, monomer.

The protein localises to the cytoplasm. The catalysed reaction is GTP + H2O = GDP + phosphate + H(+). In terms of biological role, GTP hydrolase that promotes the GTP-dependent binding of aminoacyl-tRNA to the A-site of ribosomes during protein biosynthesis. This is Elongation factor Tu from Alkalilimnicola ehrlichii (strain ATCC BAA-1101 / DSM 17681 / MLHE-1).